We begin with the raw amino-acid sequence, 479 residues long: Ribosomal RNA small subunit methyltransferase F (479 aa).

S-adenosyl-L-methionine contacts are provided by residues 125–131 (AAAPGSK), Glu-149, Asp-176, and Asp-194. Cys-247 (nucleophile) is an active-site residue.

Belongs to the class I-like SAM-binding methyltransferase superfamily. RsmB/NOP family.

It is found in the cytoplasm. It catalyses the reaction cytidine(1407) in 16S rRNA + S-adenosyl-L-methionine = 5-methylcytidine(1407) in 16S rRNA + S-adenosyl-L-homocysteine + H(+). Its function is as follows. Specifically methylates the cytosine at position 1407 (m5C1407) of 16S rRNA. The sequence is that of Ribosomal RNA small subunit methyltransferase F from Shigella sonnei (strain Ss046).